The sequence spans 444 residues: Transcription factor PIF5 (444 aa).

The tract at residues 26-39 (EDELVELLWRDGQV) is involved in interaction with phyB. Disordered regions lie at residues 154 to 265 (HCGS…NLSE) and 416 to 444 (MLGF…GKIG). Residues 155 to 171 (CGSNQSTNIHQATTLPV) show a composition bias toward polar residues. Positions 175 to 185 (DRSKNVEERLD) are enriched in basic and acidic residues. A compositionally biased stretch (low complexity) spans 187–197 (SSGGSSGCSYG). The segment covering 224–244 (ESVSQSDIGLTSTDDQTMGNK) has biased composition (polar residues). The span at 256-265 (RAAEVHNLSE) shows a compositional bias: basic and acidic residues. The bHLH domain maps to 256-305 (RAAEVHNLSERRRRDRINERMKALQELIPHCSRTDKASILDEAIDYLKSL). Residues 424–437 (GPQSQLSAPATTDS) are compositionally biased toward polar residues. Ser-437 carries the phosphoserine modification.

As to quaternary structure, homodimer. Interacts specifically with the Pfr form of phytochrome B and with TOC1/APRR1. May form a heterodimer with PIF3. Interacts with PHYB, CRY1 and CRY2 in the nucleus in response to low blue light (LBL). Interacts with TOPP4. Associates to PTAC12/HMR/PAP5 which acts as a transcriptional coactivator. Phosphorylated. Additional phosphorylations induced within 60 seconds following phytochrome B photoactivation. In terms of processing, dephosphorylated by TOPP4 during photomorphogenesis, leading to subsequent degradation of PIF5 by the proteasomal pathway. Mainly expressed in leaves and seedlings, and, to a lower extent, in stems, fruits, flowers and roots.

It localises to the nucleus. In terms of biological role, transcription factor acting negatively in the phytochrome B signaling pathway to promote the shade-avoidance response. Regulates PHYB abundance at the post-transcriptional level, possibly via the ubiquitin-proteasome pathway. Promotes ethylene activity in the dark. May regulate the expression of a subset of genes by binding to the G-box motif. Might be involved in the integration of light-signals to control both circadian and photomorphogenic processes. Activated by CRY1 and CRY2 in response to low blue light (LBL) by direct binding at chromatin on E-box variant 5'-CA[CT]GTG-3' to stimulate specific gene expression to adapt global physiology (e.g. hypocotyl elongation in low blue light). The polypeptide is Transcription factor PIF5 (Arabidopsis thaliana (Mouse-ear cress)).